A 235-amino-acid polypeptide reads, in one-letter code: Uracil-DNA glycosylase (235 aa).

Asp71 acts as the Proton acceptor in catalysis.

Belongs to the uracil-DNA glycosylase (UDG) superfamily. UNG family.

Its subcellular location is the cytoplasm. It catalyses the reaction Hydrolyzes single-stranded DNA or mismatched double-stranded DNA and polynucleotides, releasing free uracil.. In terms of biological role, excises uracil residues from the DNA which can arise as a result of misincorporation of dUMP residues by DNA polymerase or due to deamination of cytosine. The polypeptide is Uracil-DNA glycosylase (Campylobacter hominis (strain ATCC BAA-381 / DSM 21671 / CCUG 45161 / LMG 19568 / NCTC 13146 / CH001A)).